The sequence spans 197 residues: Potassium-transporting ATPase KdpC subunit (197 aa).

Residues 7–27 (PALVSMGLFTVLLGLAYPLAV) form a helical membrane-spanning segment.

It belongs to the KdpC family. As to quaternary structure, the system is composed of three essential subunits: KdpA, KdpB and KdpC.

The protein resides in the cell inner membrane. Its function is as follows. Part of the high-affinity ATP-driven potassium transport (or Kdp) system, which catalyzes the hydrolysis of ATP coupled with the electrogenic transport of potassium into the cytoplasm. This subunit acts as a catalytic chaperone that increases the ATP-binding affinity of the ATP-hydrolyzing subunit KdpB by the formation of a transient KdpB/KdpC/ATP ternary complex. This is Potassium-transporting ATPase KdpC subunit from Caulobacter vibrioides (strain ATCC 19089 / CIP 103742 / CB 15) (Caulobacter crescentus).